We begin with the raw amino-acid sequence, 516 residues long: GMP synthase [glutamine-hydrolyzing] (516 aa).

The Glutamine amidotransferase type-1 domain occupies Lys-6–Gly-199. The active-site Nucleophile is Cys-83. Catalysis depends on residues His-173 and Glu-175. The 192-residue stretch at Trp-200–Arg-391 folds into the GMPS ATP-PPase domain. Residue Ser-227–Thr-233 coordinates ATP.

Homodimer.

It carries out the reaction XMP + L-glutamine + ATP + H2O = GMP + L-glutamate + AMP + diphosphate + 2 H(+). The protein operates within purine metabolism; GMP biosynthesis; GMP from XMP (L-Gln route): step 1/1. Functionally, catalyzes the synthesis of GMP from XMP. The sequence is that of GMP synthase [glutamine-hydrolyzing] from Solidesulfovibrio magneticus (strain ATCC 700980 / DSM 13731 / RS-1) (Desulfovibrio magneticus).